A 95-amino-acid polypeptide reads, in one-letter code: Large ribosomal subunit protein uL23 (95 aa).

Belongs to the universal ribosomal protein uL23 family. Part of the 50S ribosomal subunit. Contacts protein L29, and trigger factor when it is bound to the ribosome.

Its function is as follows. One of the early assembly proteins it binds 23S rRNA. One of the proteins that surrounds the polypeptide exit tunnel on the outside of the ribosome. Forms the main docking site for trigger factor binding to the ribosome. The polypeptide is Large ribosomal subunit protein uL23 (Desulfitobacterium hafniense (strain DSM 10664 / DCB-2)).